Consider the following 199-residue polypeptide: Interleukin-11 (199 aa).

Positions 1 to 21 (MNCVCRLVLVVLSLWPDRVVA) are cleaved as a signal peptide. The tract at residues 182–190 (HLTLDWAVR) is important for interaction with IL11RA and for the stimulation of cell proliferation.

The protein belongs to the IL-6 superfamily. In terms of assembly, interacts with IL11RA to associate with IL6ST, giving rise to a multimeric signaling complex.

The protein localises to the secreted. Functionally, cytokine that stimulates the proliferation of hematopoietic stem cells and megakaryocyte progenitor cells and induces megakaryocyte maturation resulting in increased platelet production. Also promotes the proliferation of hepatocytes in response to liver damage. Binding to its receptor formed by IL6ST and IL11RA activates a signaling cascade that promotes cell proliferation. Signaling leads to the activation of intracellular protein kinases and the phosphorylation of STAT3. The interaction with the membrane-bound IL11RA and IL6ST stimulates 'classic signaling', whereas the binding of IL11 and soluble IL11RA to IL6ST stimulates 'trans-signaling'. In Rattus norvegicus (Rat), this protein is Interleukin-11.